We begin with the raw amino-acid sequence, 121 residues long: Small ribosomal subunit protein uS13 (121 aa).

Positions 95 to 121 (GLPVRGQKTKTNARTRKGKRKTVGAKS) are disordered.

Belongs to the universal ribosomal protein uS13 family. In terms of assembly, part of the 30S ribosomal subunit. Forms a loose heterodimer with protein S19. Forms two bridges to the 50S subunit in the 70S ribosome.

In terms of biological role, located at the top of the head of the 30S subunit, it contacts several helices of the 16S rRNA. In the 70S ribosome it contacts the 23S rRNA (bridge B1a) and protein L5 of the 50S subunit (bridge B1b), connecting the 2 subunits; these bridges are implicated in subunit movement. Contacts the tRNAs in the A and P-sites. This is Small ribosomal subunit protein uS13 from Campylobacter jejuni subsp. jejuni serotype O:6 (strain 81116 / NCTC 11828).